The chain runs to 239 residues: Exosome complex component Rrp4 (239 aa).

Residues 67-139 (GDFVVGIVEE…PVQRVELSLL (73 aa)) form the S1 motif domain. In terms of domain architecture, KH spans 151-217 (QGGQVVEIDP…LAVRAIREIE (67 aa)).

It belongs to the RRP4 family. As to quaternary structure, component of the archaeal exosome complex. Forms a trimer of Rrp4 and/or Csl4 subunits. The trimer associates with a hexameric ring-like arrangement composed of 3 Rrp41-Rrp42 heterodimers.

It localises to the cytoplasm. Its function is as follows. Non-catalytic component of the exosome, which is a complex involved in RNA degradation. Increases the RNA binding and the efficiency of RNA degradation. Confers strong poly(A) specificity to the exosome. This chain is Exosome complex component Rrp4, found in Methanopyrus kandleri (strain AV19 / DSM 6324 / JCM 9639 / NBRC 100938).